A 312-amino-acid chain; its full sequence is Expansin-A24 (312 aa).

Positions 1 to 27 (MELLKRKLYAKILMMVMVIWIAPMTNG) are cleaved as a signal peptide. A disordered region spans residues 31 to 86 (ASHVPGGRPGAHPSHGAHPAHGAHPSHGAHPSHGAHPSHGAHPSHGALPSHGGQVP). The segment covering 40–77 (GAHPSHGAHPAHGAHPSHGAHPSHGAHPSHGAHPSHGA) has biased composition (low complexity). Repeat copies occupy residues 42–47 (HPSHGA), 48–53 (HPAHGA), 54–59 (HPSHGA), 60–65 (HPSHGA), 66–71 (HPSHGA), and 72–77 (HPSHGA). A 6 X 6 AA tandem repeats of H-P-S-H-G-A region spans residues 42-77 (HPSHGAHPAHGAHPSHGAHPSHGAHPSHGAHPSHGA). The Expansin-like EG45 domain occupies 108 to 218 (QGACGYGDLH…RRVPCAKIGG (111 aa)). Residues 228 to 307 (HFLMILPYNV…DWKCNGQSFD (80 aa)) form the Expansin-like CBD domain.

It belongs to the expansin family. Expansin A subfamily.

Its subcellular location is the secreted. The protein resides in the cell wall. It localises to the membrane. In terms of biological role, causes loosening and extension of plant cell walls by disrupting non-covalent bonding between cellulose microfibrils and matrix glucans. No enzymatic activity has been found. The sequence is that of Expansin-A24 (EXPA24) from Arabidopsis thaliana (Mouse-ear cress).